We begin with the raw amino-acid sequence, 240 residues long: MMNPSKRKLLYSGKVKSMYETDEPGFLIAEFRDDTTAFDGEKHEKLARKGVINNQINAHIMQALKDAGILTHFESVLSPNESLVRRLKMIPLECVVRNIAAGSLCRRLGIESGLRLNPPLYELFLKNDALHDPMINENHALSFGWATQAQLDRMKELSFKINNVLFALFSNVNLILVDAKYEFGVSNDEIYLGDEISPDSCRIWDAKTKEPLDKDRFRKDMGRVVESYEEIAHRFQIKLS.

The protein belongs to the SAICAR synthetase family.

The catalysed reaction is 5-amino-1-(5-phospho-D-ribosyl)imidazole-4-carboxylate + L-aspartate + ATP = (2S)-2-[5-amino-1-(5-phospho-beta-D-ribosyl)imidazole-4-carboxamido]succinate + ADP + phosphate + 2 H(+). Its pathway is purine metabolism; IMP biosynthesis via de novo pathway; 5-amino-1-(5-phospho-D-ribosyl)imidazole-4-carboxamide from 5-amino-1-(5-phospho-D-ribosyl)imidazole-4-carboxylate: step 1/2. This chain is Phosphoribosylaminoimidazole-succinocarboxamide synthase, found in Coxiella burnetii (strain RSA 493 / Nine Mile phase I).